The sequence spans 259 residues: Ribonuclease HII (259 aa).

Residues 70-258 enclose the RNase H type-2 domain; the sequence is TLIAGIDEVG…VKSLVLGKKE (189 aa). 3 residues coordinate a divalent metal cation: Asp76, Glu77, and Asp168.

The protein belongs to the RNase HII family. Mn(2+) serves as cofactor. Mg(2+) is required as a cofactor.

It is found in the cytoplasm. It carries out the reaction Endonucleolytic cleavage to 5'-phosphomonoester.. Functionally, endonuclease that specifically degrades the RNA of RNA-DNA hybrids. The chain is Ribonuclease HII from Streptococcus pneumoniae (strain Hungary19A-6).